The sequence spans 220 residues: Glutathione S-transferase-like protein FUS3 (220 aa).

The GST N-terminal domain occupies 3-84; that stretch reads SFGTLYTYMP…YVAQSGPQAS (82 aa). The GST C-terminal domain occupies 90-220; sequence DAMSSAKIRQ…LIEKRRIGAK (131 aa).

It belongs to the GST superfamily.

Functionally, glutathione S-transferase-like protein; part of the gene cluster that mediates the biosynthesis of the mycotoxin fusarin C. Within the cluster, FUS1, FUS2, FUS8 and FUS9 are sufficient for fusarin production. The other FUS cluster members are not essential for fusarin C biosynthesis. The sequence is that of Glutathione S-transferase-like protein FUS3 from Gibberella moniliformis (strain M3125 / FGSC 7600) (Maize ear and stalk rot fungus).